A 536-amino-acid chain; its full sequence is Membrane protein insertase YidC (536 aa).

The helical transmembrane segment at 14–34 threads the bilayer; that stretch reads ILIATAISLLFFIPYSYFFAP. The tract at residues 43–69 is disordered; that stretch reads STSMERAEQQAAPQTSSSPKEGQVSSV. The segment covering 53-68 has biased composition (polar residues); it reads AAPQTSSSPKEGQVSS. Transmembrane regions (helical) follow at residues 312–332, 339–359, 401–421, 436–456, and 484–504; these read VVEY…LDWL, WGWA…PLTY, GANP…FFAI, WILW…PILM, and PLIF…YWFV.

It belongs to the OXA1/ALB3/YidC family. Type 1 subfamily. In terms of assembly, interacts with the Sec translocase complex via SecD. Specifically interacts with transmembrane segments of nascent integral membrane proteins during membrane integration.

The protein localises to the cell inner membrane. Required for the insertion and/or proper folding and/or complex formation of integral membrane proteins into the membrane. Involved in integration of membrane proteins that insert both dependently and independently of the Sec translocase complex, as well as at least some lipoproteins. Aids folding of multispanning membrane proteins. This Wolinella succinogenes (strain ATCC 29543 / DSM 1740 / CCUG 13145 / JCM 31913 / LMG 7466 / NCTC 11488 / FDC 602W) (Vibrio succinogenes) protein is Membrane protein insertase YidC.